The chain runs to 263 residues: Putative TATA-binding protein pB263R (263 aa).

It belongs to the asfivirus B263R family.

Putative TATA-binding protein. The chain is Putative TATA-binding protein pB263R from African swine fever virus (isolate Pig/Kenya/KEN-50/1950) (ASFV).